The chain runs to 175 residues: MMLYIVFILSVIFVIGFVGFSSKPSPIYGGLGLIVSGGVGCGIVLNFGGSFLGLMVFLIYLGGMMVVFGYTTAMATEQYPEIWLLNKAVLGAFITALLMEFFMVYYVLKDKEVEIVFEFNGLGDWVIYDTGDSGFFSEEAMGIAALYSYGTWLVIVTGWSLFIGVVVIMEITRGN.

5 helical membrane-spanning segments follow: residues 1 to 21 (MMLY…VGFS), 25 to 45 (SPIY…GIVL), 47 to 67 (FGGS…MMVV), 88 to 108 (AVLG…YYVL), and 149 to 169 (YGTW…VVIM).

It belongs to the complex I subunit 6 family. In terms of assembly, core subunit of respiratory chain NADH dehydrogenase (Complex I) which is composed of 45 different subunits.

It is found in the mitochondrion inner membrane. The enzyme catalyses a ubiquinone + NADH + 5 H(+)(in) = a ubiquinol + NAD(+) + 4 H(+)(out). Its function is as follows. Core subunit of the mitochondrial membrane respiratory chain NADH dehydrogenase (Complex I) which catalyzes electron transfer from NADH through the respiratory chain, using ubiquinone as an electron acceptor. Essential for the catalytic activity and assembly of complex I. This chain is NADH-ubiquinone oxidoreductase chain 6 (MT-ND6), found in Bos mutus grunniens (Wild yak).